The following is a 490-amino-acid chain: Bifunctional protein HldE (490 aa).

The segment at 1–330 (MDRTNIENFL…EAMAHHALEY (330 aa)) is ribokinase. Residue 205–208 (NRKE) coordinates ATP. Asp275 is an active-site residue. The interval 356-490 (FTNGCFDLLH…ERILDRYEQG (135 aa)) is cytidylyltransferase.

This sequence in the N-terminal section; belongs to the carbohydrate kinase PfkB family. The protein in the C-terminal section; belongs to the cytidylyltransferase family. As to quaternary structure, homodimer.

The enzyme catalyses D-glycero-beta-D-manno-heptose 7-phosphate + ATP = D-glycero-beta-D-manno-heptose 1,7-bisphosphate + ADP + H(+). It carries out the reaction D-glycero-beta-D-manno-heptose 1-phosphate + ATP + H(+) = ADP-D-glycero-beta-D-manno-heptose + diphosphate. It functions in the pathway nucleotide-sugar biosynthesis; ADP-L-glycero-beta-D-manno-heptose biosynthesis; ADP-L-glycero-beta-D-manno-heptose from D-glycero-beta-D-manno-heptose 7-phosphate: step 1/4. It participates in nucleotide-sugar biosynthesis; ADP-L-glycero-beta-D-manno-heptose biosynthesis; ADP-L-glycero-beta-D-manno-heptose from D-glycero-beta-D-manno-heptose 7-phosphate: step 3/4. Functionally, catalyzes the phosphorylation of D-glycero-D-manno-heptose 7-phosphate at the C-1 position to selectively form D-glycero-beta-D-manno-heptose-1,7-bisphosphate. Its function is as follows. Catalyzes the ADP transfer from ATP to D-glycero-beta-D-manno-heptose 1-phosphate, yielding ADP-D-glycero-beta-D-manno-heptose. The sequence is that of Bifunctional protein HldE from Syntrophotalea carbinolica (strain DSM 2380 / NBRC 103641 / GraBd1) (Pelobacter carbinolicus).